Here is a 230-residue protein sequence, read N- to C-terminus: MKYNSVIRKAIFLRRPNRFQAYVVLDDEELLVHVPNTGRCREILKEGCTVLLRKGTTPNRKTPYDLIAAYKGEILINIDSQIPNKVVEEALINKKIEKLVNFNNISREKTFGNSRFDFKLQDDNENIYFLEVKGVTLEENGETRFPDAPTERGKKHILELIEIKKLGMGAGIIFLIQIDNVNKFSPNDETDPKFGEALRLAKKEGVDIFAYNCKVTEEEIELLNPVEIVL.

Belongs to the SfsA family.

In Clostridium perfringens (strain SM101 / Type A), this protein is Sugar fermentation stimulation protein homolog.